The chain runs to 521 residues: Glutamate--cysteine ligase (521 aa).

The protein belongs to the glutamate--cysteine ligase type 1 family. Type 1 subfamily.

The catalysed reaction is L-cysteine + L-glutamate + ATP = gamma-L-glutamyl-L-cysteine + ADP + phosphate + H(+). It functions in the pathway sulfur metabolism; glutathione biosynthesis; glutathione from L-cysteine and L-glutamate: step 1/2. The sequence is that of Glutamate--cysteine ligase from Aliivibrio salmonicida (strain LFI1238) (Vibrio salmonicida (strain LFI1238)).